The chain runs to 413 residues: Serine hydroxymethyltransferase (413 aa).

(6S)-5,6,7,8-tetrahydrofolate-binding positions include Leu119 and 123–125; that span reads GHL. The residue at position 228 (Lys228) is an N6-(pyridoxal phosphate)lysine. 351 to 353 lines the (6S)-5,6,7,8-tetrahydrofolate pocket; it reads SPF.

It belongs to the SHMT family. As to quaternary structure, homodimer. It depends on pyridoxal 5'-phosphate as a cofactor.

It localises to the cytoplasm. It catalyses the reaction (6R)-5,10-methylene-5,6,7,8-tetrahydrofolate + glycine + H2O = (6S)-5,6,7,8-tetrahydrofolate + L-serine. It participates in one-carbon metabolism; tetrahydrofolate interconversion. Its pathway is amino-acid biosynthesis; glycine biosynthesis; glycine from L-serine: step 1/1. In terms of biological role, catalyzes the reversible interconversion of serine and glycine with tetrahydrofolate (THF) serving as the one-carbon carrier. This reaction serves as the major source of one-carbon groups required for the biosynthesis of purines, thymidylate, methionine, and other important biomolecules. Also exhibits THF-independent aldolase activity toward beta-hydroxyamino acids, producing glycine and aldehydes, via a retro-aldol mechanism. The protein is Serine hydroxymethyltransferase of Clostridium botulinum (strain ATCC 19397 / Type A).